The primary structure comprises 601 residues: DNA ligase (601 aa).

Aspartate 258 is an ATP binding site. Catalysis depends on lysine 260, which acts as the N6-AMP-lysine intermediate. ATP contacts are provided by arginine 265, arginine 280, glutamate 310, phenylalanine 350, arginine 427, and lysine 433. A disordered region spans residues aspartate 568–valine 601.

This sequence belongs to the ATP-dependent DNA ligase family. Mg(2+) is required as a cofactor.

It carries out the reaction ATP + (deoxyribonucleotide)n-3'-hydroxyl + 5'-phospho-(deoxyribonucleotide)m = (deoxyribonucleotide)n+m + AMP + diphosphate.. Its function is as follows. DNA ligase that seals nicks in double-stranded DNA during DNA replication, DNA recombination and DNA repair. In Saccharolobus islandicus (strain Y.N.15.51 / Yellowstone #2) (Sulfolobus islandicus), this protein is DNA ligase.